A 213-amino-acid polypeptide reads, in one-letter code: Imidazole glycerol phosphate synthase subunit HisH (213 aa).

In terms of domain architecture, Glutamine amidotransferase type-1 spans N4–D211. Residue C82 is the Nucleophile of the active site. Active-site residues include H186 and E188.

As to quaternary structure, heterodimer of HisH and HisF.

The protein localises to the cytoplasm. It catalyses the reaction 5-[(5-phospho-1-deoxy-D-ribulos-1-ylimino)methylamino]-1-(5-phospho-beta-D-ribosyl)imidazole-4-carboxamide + L-glutamine = D-erythro-1-(imidazol-4-yl)glycerol 3-phosphate + 5-amino-1-(5-phospho-beta-D-ribosyl)imidazole-4-carboxamide + L-glutamate + H(+). It carries out the reaction L-glutamine + H2O = L-glutamate + NH4(+). It participates in amino-acid biosynthesis; L-histidine biosynthesis; L-histidine from 5-phospho-alpha-D-ribose 1-diphosphate: step 5/9. In terms of biological role, IGPS catalyzes the conversion of PRFAR and glutamine to IGP, AICAR and glutamate. The HisH subunit catalyzes the hydrolysis of glutamine to glutamate and ammonia as part of the synthesis of IGP and AICAR. The resulting ammonia molecule is channeled to the active site of HisF. The polypeptide is Imidazole glycerol phosphate synthase subunit HisH (Prochlorococcus marinus (strain SARG / CCMP1375 / SS120)).